We begin with the raw amino-acid sequence, 64 residues long: Large ribosomal subunit protein uL29 (64 aa).

The protein belongs to the universal ribosomal protein uL29 family.

The chain is Large ribosomal subunit protein uL29 from Chloroherpeton thalassium (strain ATCC 35110 / GB-78).